Here is a 313-residue protein sequence, read N- to C-terminus: Homoserine O-acetyltransferase (313 aa).

Cys-142 acts as the Acyl-thioester intermediate in catalysis. Lys-163 and Ser-191 together coordinate substrate. Residue His-234 is the Proton acceptor of the active site. Glu-236 is a catalytic residue. Residue Arg-248 coordinates substrate.

This sequence belongs to the MetA family.

It is found in the cytoplasm. The catalysed reaction is L-homoserine + acetyl-CoA = O-acetyl-L-homoserine + CoA. It functions in the pathway amino-acid biosynthesis; L-methionine biosynthesis via de novo pathway; O-acetyl-L-homoserine from L-homoserine: step 1/1. Functionally, transfers an acetyl group from acetyl-CoA to L-homoserine, forming acetyl-L-homoserine. This Streptococcus sanguinis (strain SK36) protein is Homoserine O-acetyltransferase.